The primary structure comprises 353 residues: Melanin-concentrating hormone receptor 1 (353 aa).

A disordered region spans residues 1 to 26; the sequence is MDLQTSLLSTGPNASNISDGQDNLTL. The Extracellular portion of the chain corresponds to 1-45; sequence MDLQTSLLSTGPNASNISDGQDNLTLPGSPPRTGSVSYINIIMPS. Asn-13, Asn-16, and Asn-23 each carry an N-linked (GlcNAc...) asparagine glycan. Residues 46 to 66 traverse the membrane as a helical segment; it reads VFGTICLLGIVGNSTVIFAVV. At 67 to 79 the chain is on the cytoplasmic side; sequence KKSKLHWCSNVPD. A helical membrane pass occupies residues 80-100; that stretch reads IFIINLSVVDLLFLLGMPFMI. Over 101–116 the chain is Extracellular; that stretch reads HQLMGNGVWHFGETMC. Cys-116 and Cys-194 are joined by a disulfide. A helical transmembrane segment spans residues 117–139; the sequence is TLITAMDANSQFTSTYILTAMTI. Over 140–161 the chain is Cytoplasmic; the sequence is DRYLATVHPISSTKFRKPSMAT. Residues 162–182 form a helical membrane-spanning segment; that stretch reads LVICLLWALSFISITPVWLYA. Residues 183-204 are Extracellular-facing; sequence RLIPFPGGAVGCGIRLPNPDTD. Residues 205–225 traverse the membrane as a helical segment; it reads LYWFTLYQFFLAFALPFVVIT. Residues 226 to 256 are Cytoplasmic-facing; the sequence is AAYVKILQRMTSSVAPASQRSIRLRTKRVTR. The helical transmembrane segment at 257 to 277 threads the bilayer; sequence TAIAICLVFFVCWAPYYVLQL. Over 278–294 the chain is Extracellular; sequence TQLSISRPTLTFVYLYN. A helical membrane pass occupies residues 295–315; it reads AAISLGYANSCLNPFVYIVLC. Topologically, residues 316–353 are cytoplasmic; sequence ETFRKRLVLSVKPAAQGQLRTVSNAQTADEERTESKGT.

It belongs to the G-protein coupled receptor 1 family. In terms of assembly, interacts with NCDN. High level in the brain, moderate amounts in the eye and skeletal muscle, and small amounts in tongue and pituitary.

Its subcellular location is the cell membrane. Functionally, receptor for melanin-concentrating hormone, coupled to G proteins that inhibit adenylyl cyclase. The polypeptide is Melanin-concentrating hormone receptor 1 (Rattus norvegicus (Rat)).